The primary structure comprises 312 residues: Acetyl-coenzyme A carboxylase carboxyl transferase subunit beta (312 aa).

The CoA carboxyltransferase N-terminal domain maps to 24 to 293 (LWIKCPDSGQ…PHADEVAAPP (270 aa)). Residues 286 to 312 (ADEVAAPPPPDVEGPPPAAEPVALPPA) form a disordered region. A compositionally biased stretch (pro residues) spans 291–312 (APPPPDVEGPPPAAEPVALPPA).

Belongs to the AccD/PCCB family. In terms of assembly, acetyl-CoA carboxylase is a heterohexamer composed of biotin carboxyl carrier protein (AccB), biotin carboxylase (AccC) and two subunits each of ACCase subunit alpha (AccA) and ACCase subunit beta (AccD).

It localises to the cytoplasm. The catalysed reaction is N(6)-carboxybiotinyl-L-lysyl-[protein] + acetyl-CoA = N(6)-biotinyl-L-lysyl-[protein] + malonyl-CoA. It participates in lipid metabolism; malonyl-CoA biosynthesis; malonyl-CoA from acetyl-CoA: step 1/1. Functionally, component of the acetyl coenzyme A carboxylase (ACC) complex. Biotin carboxylase (BC) catalyzes the carboxylation of biotin on its carrier protein (BCCP) and then the CO(2) group is transferred by the transcarboxylase to acetyl-CoA to form malonyl-CoA. The chain is Acetyl-coenzyme A carboxylase carboxyl transferase subunit beta from Afipia carboxidovorans (strain ATCC 49405 / DSM 1227 / KCTC 32145 / OM5) (Oligotropha carboxidovorans).